Consider the following 615-residue polypeptide: Medium-chain acyl-CoA ligase ACSF2, mitochondrial (615 aa).

Residues 1-41 (MAVYVGMLRLGRLCAGSSGVLGARVALSRSWQEARLQGVRF) constitute a mitochondrion transit peptide. Lys-179 bears the N6-acetyllysine mark. Residue Lys-182 is modified to N6-acetyllysine; alternate. The residue at position 182 (Lys-182) is an N6-succinyllysine; alternate. 263-271 (TSGTTGSPK) contacts ATP. An N6-acetyllysine mark is found at Lys-340 and Lys-398. Position 478 is an N6-succinyllysine (Lys-478). Residues Asp-493 and Arg-508 each coordinate ATP. Lys-510 is subject to N6-acetyllysine. Residues Lys-544 and Lys-570 each carry the N6-acetyllysine; alternate modification. N6-succinyllysine; alternate is present on residues Lys-544 and Lys-570. Lys-599 serves as a coordination point for ATP. N6-succinyllysine is present on Lys-599.

Belongs to the ATP-dependent AMP-binding enzyme family.

The protein localises to the mitochondrion. It carries out the reaction a medium-chain fatty acid + ATP + CoA = a medium-chain fatty acyl-CoA + AMP + diphosphate. The catalysed reaction is octanoate + ATP + CoA = octanoyl-CoA + AMP + diphosphate. Acyl-CoA synthases catalyze the initial reaction in fatty acid metabolism, by forming a thioester with CoA. Has some preference toward medium-chain substrates. Plays a role in adipocyte differentiation. This Pongo abelii (Sumatran orangutan) protein is Medium-chain acyl-CoA ligase ACSF2, mitochondrial.